The primary structure comprises 378 residues: Erythronate-4-phosphate dehydrogenase (378 aa).

Ser45 and Thr66 together coordinate substrate. Asp146 and Thr175 together coordinate NAD(+). Residue Arg208 is part of the active site. Residue Asp232 participates in NAD(+) binding. Residue Glu237 is part of the active site. Catalysis depends on His254, which acts as the Proton donor. NAD(+) is bound at residue Gly257. Tyr258 is a binding site for substrate.

The protein belongs to the D-isomer specific 2-hydroxyacid dehydrogenase family. PdxB subfamily. Homodimer.

The protein resides in the cytoplasm. It catalyses the reaction 4-phospho-D-erythronate + NAD(+) = (R)-3-hydroxy-2-oxo-4-phosphooxybutanoate + NADH + H(+). It participates in cofactor biosynthesis; pyridoxine 5'-phosphate biosynthesis; pyridoxine 5'-phosphate from D-erythrose 4-phosphate: step 2/5. Functionally, catalyzes the oxidation of erythronate-4-phosphate to 3-hydroxy-2-oxo-4-phosphonooxybutanoate. The polypeptide is Erythronate-4-phosphate dehydrogenase (Salmonella dublin (strain CT_02021853)).